The following is a 333-amino-acid chain: Ornithine carbamoyltransferase (333 aa).

Residues 57 to 60 (STRT), Gln-83, Arg-107, and 134 to 137 (HPTQ) contribute to the carbamoyl phosphate site. Residues Asn-168, Asp-232, and 236-237 (SM) contribute to the L-ornithine site. Carbamoyl phosphate is bound by residues 274–275 (CL) and Arg-319.

Belongs to the aspartate/ornithine carbamoyltransferase superfamily. OTCase family.

Its subcellular location is the cytoplasm. It carries out the reaction carbamoyl phosphate + L-ornithine = L-citrulline + phosphate + H(+). Its pathway is amino-acid biosynthesis; L-arginine biosynthesis; L-arginine from L-ornithine and carbamoyl phosphate: step 1/3. Functionally, reversibly catalyzes the transfer of the carbamoyl group from carbamoyl phosphate (CP) to the N(epsilon) atom of ornithine (ORN) to produce L-citrulline. The polypeptide is Ornithine carbamoyltransferase (Photobacterium profundum (strain SS9)).